A 107-amino-acid chain; its full sequence is Ferredoxin (107 aa).

4Fe-4S ferredoxin-type domains lie at 8-37 (ERVV…LDEN) and 38-67 (GKSR…KASE). Cys-17, Cys-20, and Cys-23 together coordinate [4Fe-4S] cluster. Cys-27, Cys-47, and Cys-53 together coordinate [3Fe-4S] cluster. Cys-57 contributes to the [4Fe-4S] cluster binding site.

Monomer. [4Fe-4S] cluster serves as cofactor. [3Fe-4S] cluster is required as a cofactor. In terms of processing, the N-terminus is blocked.

In terms of biological role, ferredoxins are iron-sulfur proteins that transfer electrons in a wide variety of metabolic reactions. The polypeptide is Ferredoxin (Pyrobaculum islandicum (strain DSM 4184 / JCM 9189 / GEO3)).